Consider the following 1134-residue polypeptide: Protocadherin-18 (1134 aa).

A signal peptide spans 1–27 (MYQMNAKMHFTFVFALLVVSFNLDVLG). Cadherin domains follow at residues 28–137 (KNLK…SPQF), 138–246 (SRSL…SPAF), 247–354 (EQQS…KPEI), 361–465 (PGKE…PPHF), 466–576 (QRSR…VPVV), and 582–697 (RNNT…APLD). The Extracellular segment spans residues 28-699 (KNLKYRIYEE…SVSQAPLDVS (672 aa)). The N-linked (GlcNAc...) asparagine glycan is linked to N103. The N-linked (GlcNAc...) asparagine glycan is linked to N269. N-linked (GlcNAc...) asparagine glycosylation occurs at N559. The helical transmembrane segment at 700–720 (MIIIISLGAICAVLLVIMVLF) threads the bilayer. The Cytoplasmic segment spans residues 721–1134 (ATRCNREKKD…NKLLQDVRQS (414 aa)). Disordered stretches follow at residues 768 to 800 (TLPI…NSHQ), 868 to 888 (SLKD…DLGR), and 941 to 1003 (DYRS…TSSL). The span at 791 to 800 (GSRQSHNSHQ) shows a compositional bias: polar residues. Positions 868 to 877 (SLKDSGRGDS) are enriched in basic and acidic residues. The tract at residues 892–1134 (IDRLLGEGFS…NKLLQDVRQS (243 aa)) is interaction with DAB1.

In terms of assembly, interacts with DAB1.

It localises to the cell membrane. Functionally, potential calcium-dependent cell-adhesion protein. The sequence is that of Protocadherin-18 (PCDH18) from Bos taurus (Bovine).